Reading from the N-terminus, the 154-residue chain is Dau c 1 isoallergen Dau c 1.0301 (154 aa).

Belongs to the BetVI family. In terms of tissue distribution, expressed in roots.

The chain is Dau c 1 isoallergen Dau c 1.0301 from Daucus carota (Wild carrot).